Reading from the N-terminus, the 65-residue chain is Conotoxin Cal1.3 (65 aa).

Residues 1–18 (MRCLPVFIILLLLASTAA) form the signal peptide. Positions 19–49 (VDVAGSKLKRRLERKPYQGSQAYVKKTAFGL) are excised as a propeptide. Intrachain disulfides connect Cys-52/Cys-62 and Cys-53/Cys-59. Pro-61 is subject to 4-hydroxyproline. Cys-62 carries the post-translational modification Cysteine amide.

The protein belongs to the conotoxin T superfamily. In terms of tissue distribution, expressed by the venom duct.

It localises to the secreted. Functionally, probable neurotoxin with unknown target. Possibly targets ion channels. The protein is Conotoxin Cal1.3 of Californiconus californicus (California cone).